Consider the following 877-residue polypeptide: Phosphoenolpyruvate carboxylase (877 aa).

Active-site residues include histidine 137 and lysine 542.

The protein belongs to the PEPCase type 1 family. The cofactor is Mg(2+).

The enzyme catalyses oxaloacetate + phosphate = phosphoenolpyruvate + hydrogencarbonate. Functionally, forms oxaloacetate, a four-carbon dicarboxylic acid source for the tricarboxylic acid cycle. This chain is Phosphoenolpyruvate carboxylase, found in Tolumonas auensis (strain DSM 9187 / NBRC 110442 / TA 4).